The chain runs to 98 residues: Large ribosomal subunit protein uL23 (98 aa).

Belongs to the universal ribosomal protein uL23 family. As to quaternary structure, part of the 50S ribosomal subunit. Contacts protein L29, and trigger factor when it is bound to the ribosome.

Its function is as follows. One of the early assembly proteins it binds 23S rRNA. One of the proteins that surrounds the polypeptide exit tunnel on the outside of the ribosome. Forms the main docking site for trigger factor binding to the ribosome. This chain is Large ribosomal subunit protein uL23, found in Lactobacillus johnsonii (strain CNCM I-12250 / La1 / NCC 533).